The primary structure comprises 713 residues: Polyribonucleotide nucleotidyltransferase (713 aa).

The Mg(2+) site is built by Asp493 and Asp499. Positions 560–619 constitute a KH domain; it reads PRMITIKINPEKIRDVIGKGGSVIRALTEETGTTIDISDDGVVTIASTNSEGMAEAKKRI. One can recognise an S1 motif domain in the interval 629–697; it reads GHVYEGTVLK…EKGRVRLSAK (69 aa).

This sequence belongs to the polyribonucleotide nucleotidyltransferase family. It depends on Mg(2+) as a cofactor.

Its subcellular location is the cytoplasm. It carries out the reaction RNA(n+1) + phosphate = RNA(n) + a ribonucleoside 5'-diphosphate. In terms of biological role, involved in mRNA degradation. Catalyzes the phosphorolysis of single-stranded polyribonucleotides processively in the 3'- to 5'-direction. The polypeptide is Polyribonucleotide nucleotidyltransferase (Burkholderia pseudomallei (strain 1106a)).